The sequence spans 229 residues: MANELTWHDVLAEEKQQPYFLNTLQTVASERQSGVTIYPPQKDVFNAFRFTELGDVKVVILGQDPYHGPGQAHGLAFSVRPGIATPPSLLNMYKELENTIPGFTRPNHGYLESWARQGVLLLNTVLTVRAGQAHSHASLGWETFTDKVISLINQHREGVVFLLWGSHAQKKGAIIDKQRHHVLKAPHPSPLSAHRGFFGCNHFVLANQWLEQRGETPIDWMPVLPAESE.

D64 functions as the Proton acceptor in the catalytic mechanism.

The protein belongs to the uracil-DNA glycosylase (UDG) superfamily. UNG family.

Its subcellular location is the cytoplasm. It carries out the reaction Hydrolyzes single-stranded DNA or mismatched double-stranded DNA and polynucleotides, releasing free uracil.. Its function is as follows. Excises uracil residues from the DNA which can arise as a result of misincorporation of dUMP residues by DNA polymerase or due to deamination of cytosine. This is Uracil-DNA glycosylase from Escherichia coli O45:K1 (strain S88 / ExPEC).